Consider the following 343-residue polypeptide: Heat-inducible transcription repressor HrcA (343 aa).

It belongs to the HrcA family.

In terms of biological role, negative regulator of class I heat shock genes (grpE-dnaK-dnaJ and groELS operons). Prevents heat-shock induction of these operons. The sequence is that of Heat-inducible transcription repressor HrcA from Natranaerobius thermophilus (strain ATCC BAA-1301 / DSM 18059 / JW/NM-WN-LF).